A 356-amino-acid chain; its full sequence is Probable G-protein coupled receptor 32 (356 aa).

At 1 to 44 the chain is on the extracellular side; it reads MNGVSEGTRGCSDRQPGVLTRDRSCSRKMNSSGCLSEEVGSLRP. Asparagine 30 carries an N-linked (GlcNAc...) asparagine glycan. Residues 45 to 67 form a helical membrane-spanning segment; the sequence is LTVVILSASIVVGVLGNGLVLWM. At 68–78 the chain is on the cytoplasmic side; that stretch reads TVFRMARTVST. A helical transmembrane segment spans residues 79–100; it reads VCFFHLALADFMLSLSLPIAMY. The Extracellular portion of the chain corresponds to 101 to 116; that stretch reads YIVSRQWLLGEWACKL. Residues cysteine 114 and cysteine 191 are joined by a disulfide bond. A helical transmembrane segment spans residues 117-137; that stretch reads YITFVFLSYFASNCLLVFISV. The Cytoplasmic portion of the chain corresponds to 138-156; sequence DRCISVLYPVWALNHRTVQ. The helical transmembrane segment at 157–178 threads the bilayer; that stretch reads RASWLAFGVWLLAAALCSAHLK. Over 179-220 the chain is Extracellular; the sequence is FRTTRKWNGCTHCYLAFNSDNETAQIWIEGVVEGHIIGTIGH. Asparagine 199 is a glycosylation site (N-linked (GlcNAc...) asparagine). A helical transmembrane segment spans residues 221-241; that stretch reads FLLGFLGPLAIIGTCAHLIRA. Residues 242-257 lie on the Cytoplasmic side of the membrane; sequence KLLREGWVHANRPKRL. A helical membrane pass occupies residues 258–280; it reads LLVLVSAFFIFWSPFNVVLLVHL. Residues 281–300 lie on the Extracellular side of the membrane; sequence WRRVMLKEIYHPRMLLILQA. The chain crosses the membrane as a helical span at residues 301–320; it reads SFALGCVNSSLNPFLYVFVG. The Cytoplasmic portion of the chain corresponds to 321 to 356; it reads RDFQEKFFQSLTSALARAFGEEEFLSSCPRGNAPRE.

This sequence belongs to the G-protein coupled receptor 1 family. Expressed in resting primary human macrophages.

The protein resides in the cell membrane. Its function is as follows. G-protein coupled receptor that binds to several ligands including resolvin D1 (RvD1) with high affinity, leading to rapid and transient activation of numerous intracellular signaling pathways. In macrophages, enhances the RvD1-stimulated phagocytic and clearance functions. Macrophages migrate less toward different chemoattractant stimuli but phagocytose more microbial particles. Prevents the increase in Ca(2+) and activation of ERK1/2 used by histamine and its H1 receptor subtype to induce goblet cell secretion by activating PKC and GRK2 to counter-regulate the histamine receptor. The polypeptide is Probable G-protein coupled receptor 32 (GPR32) (Homo sapiens (Human)).